Reading from the N-terminus, the 642-residue chain is Zinc finger protein 398 (642 aa).

Disordered stretches follow at residues 1–24 (MAEA…QPLP) and 198–225 (EGEH…PGIS). One can recognise a KRAB domain in the interval 143 to 214 (VAFDDVSIYF…DQAGPEESEI (72 aa)). Residues 207–220 (AGPEESEIPTDPSE) show a composition bias toward acidic residues. Lys-265 is covalently cross-linked (Glycyl lysine isopeptide (Lys-Gly) (interchain with G-Cter in SUMO2)). The segment at 343 to 364 (FSCHHCGKNLSQDMLLTHQCSH) adopts a C2H2-type 1; atypical zinc-finger fold. The C2H2-type 2; degenerate zinc-finger motif lies at 370-392 (LPCAQCPKHFTPQADLSSTSQDH). 7 consecutive C2H2-type zinc fingers follow at residues 398-420 (PTCP…LRVH), 427-449 (FPCP…RRAH), 455-477 (FRCA…QRGH), 483-505 (FSCP…QMIH), 511-533 (YPCT…RRLH), 539-561 (FSCP…QRIH), and 567-590 (YPCS…RSGH). Residues 587–615 (RSGHNGGCGGDSDPSGQPPNPPGPLITGL) form a disordered region.

This sequence belongs to the krueppel C2H2-type zinc-finger protein family.

It localises to the nucleus. Functionally, functions as a transcriptional activator. This Homo sapiens (Human) protein is Zinc finger protein 398 (ZNF398).